The chain runs to 152 residues: Ribosome maturation factor RimP (152 aa).

The protein belongs to the RimP family.

It localises to the cytoplasm. Functionally, required for maturation of 30S ribosomal subunits. In Pseudoalteromonas atlantica (strain T6c / ATCC BAA-1087), this protein is Ribosome maturation factor RimP.